The primary structure comprises 269 residues: MPGVETIKSSWADEVELDYGGLPPTTETIENGHKYVTEYKYNKDDKKTKVVRTYKISKQVVPKTVAKRRTWTKFGDSKNDKPGPNSQTTMVSEEIIMQFLNSKEDEKANDPLLDPTKNIAKCRICNGEHWSVNCPYKGTAMDTNLMEKKAAAAASAAVDAPKSGKYVPPFLKDSQKGGMGMRGRDDTAAIRISNLSESMTEADLEELVKKIGPQSKMYLARDKNTGLCKGFAYVHFKQRKDAAAAIEILNGHGYDHLILSVEWSKPQNN.

Residues 188–266 (AAIRISNLSE…LILSVEWSKP (79 aa)) form the RRM domain.

The protein belongs to the eIF-3 subunit G family. In terms of assembly, component of the eukaryotic translation initiation factor 3 (eIF-3) complex. The eIF-3 complex interacts with pix.

The protein resides in the cytoplasm. Functionally, RNA-binding component of the eukaryotic translation initiation factor 3 (eIF-3) complex, which is involved in protein synthesis of a specialized repertoire of mRNAs and, together with other initiation factors, stimulates binding of mRNA and methionyl-tRNAi to the 40S ribosome. The eIF-3 complex specifically targets and initiates translation of a subset of mRNAs involved in cell proliferation. This subunit can bind 18S rRNA. This chain is Eukaryotic translation initiation factor 3 subunit G-1, found in Drosophila mojavensis (Fruit fly).